A 561-amino-acid polypeptide reads, in one-letter code: DNA ligase B (561 aa).

Lys125 acts as the N6-AMP-lysine intermediate in catalysis.

It belongs to the NAD-dependent DNA ligase family. LigB subfamily.

It catalyses the reaction NAD(+) + (deoxyribonucleotide)n-3'-hydroxyl + 5'-phospho-(deoxyribonucleotide)m = (deoxyribonucleotide)n+m + AMP + beta-nicotinamide D-nucleotide.. Its function is as follows. Catalyzes the formation of phosphodiester linkages between 5'-phosphoryl and 3'-hydroxyl groups in double-stranded DNA using NAD as a coenzyme and as the energy source for the reaction. The protein is DNA ligase B of Salmonella paratyphi B (strain ATCC BAA-1250 / SPB7).